A 185-amino-acid polypeptide reads, in one-letter code: Adenine phosphoribosyltransferase (185 aa).

This sequence belongs to the purine/pyrimidine phosphoribosyltransferase family. As to quaternary structure, homodimer.

It localises to the cytoplasm. The catalysed reaction is AMP + diphosphate = 5-phospho-alpha-D-ribose 1-diphosphate + adenine. The protein operates within purine metabolism; AMP biosynthesis via salvage pathway; AMP from adenine: step 1/1. Its function is as follows. Catalyzes a salvage reaction resulting in the formation of AMP, that is energically less costly than de novo synthesis. This is Adenine phosphoribosyltransferase from Aliarcobacter butzleri (strain RM4018) (Arcobacter butzleri).